The primary structure comprises 288 residues: Bifunctional protein FolD 2 (288 aa).

Residues Gly166–Ser168 and Ser191 contribute to the NADP(+) site.

This sequence belongs to the tetrahydrofolate dehydrogenase/cyclohydrolase family. Homodimer.

It catalyses the reaction (6R)-5,10-methylene-5,6,7,8-tetrahydrofolate + NADP(+) = (6R)-5,10-methenyltetrahydrofolate + NADPH. It carries out the reaction (6R)-5,10-methenyltetrahydrofolate + H2O = (6R)-10-formyltetrahydrofolate + H(+). It participates in one-carbon metabolism; tetrahydrofolate interconversion. Functionally, catalyzes the oxidation of 5,10-methylenetetrahydrofolate to 5,10-methenyltetrahydrofolate and then the hydrolysis of 5,10-methenyltetrahydrofolate to 10-formyltetrahydrofolate. In Myxococcus xanthus (strain DK1622), this protein is Bifunctional protein FolD 2.